Here is a 555-residue protein sequence, read N- to C-terminus: Beta-hexosaminidase A (555 aa).

The N-terminal stretch at 1–18 is a signal peptide; it reads MRLLIPILIFALITTAVT. Residue Asn-47 is glycosylated (N-linked (GlcNAc...) asparagine). Catalysis depends on Glu-325, which acts as the Proton donor. Residues Asn-351, Asn-412, and Asn-460 are each glycosylated (N-linked (GlcNAc...) asparagine).

The protein belongs to the glycosyl hydrolase 20 family. In terms of tissue distribution, expressed in coelomocytes and neurons of the pharyngeal region and nerve cord.

The protein resides in the lysosome. The catalysed reaction is Hydrolysis of terminal non-reducing N-acetyl-D-hexosamine residues in N-acetyl-beta-D-hexosaminides.. Its function is as follows. Responsible for the degradation of GM2 gangliosides, and a variety of other molecules containing terminal N-acetyl hexosamines. Degrades chitotriose. This is Beta-hexosaminidase A (hex-1) from Caenorhabditis elegans.